A 159-amino-acid chain; its full sequence is V-type proton ATPase 16 kDa proteolipid subunit c (159 aa).

Residues 1-11 are Lumenal-facing; it reads MSEEGSPMYSP. The helical transmembrane segment at 12–32 threads the bilayer; that stretch reads FFGVMGAASAMVFSALGAAYG. Residues 33–54 are Cytoplasmic-facing; it reads TAKSGVGISAMSVMRPELIMKC. A helical membrane pass occupies residues 55 to 75; it reads IIPVVMAGIIAIYGLVVAVLI. The Lumenal segment spans residues 76-93; sequence AGKLDEAPTYTLYQGFVH. The helical transmembrane segment at 94-114 threads the bilayer; the sequence is MGAGLSVGLSGLAAGFAIGIV. Over 115–132 the chain is Cytoplasmic; that stretch reads GDAGVRGTAQQPRLYVGM. The helical transmembrane segment at 133 to 153 threads the bilayer; that stretch reads ILILIFAEVLGLYGLIVAIFL. At 154–159 the chain is on the lumenal side; it reads YTKTSS.

Belongs to the V-ATPase proteolipid subunit family. V-ATPase is a heteromultimeric enzyme made up of two complexes: the ATP-hydrolytic V1 complex and the proton translocation V0 complex. The V1 complex consists of three catalytic AB heterodimers that form a heterohexamer, three peripheral stalks each consisting of EG heterodimers, one central rotor including subunits D and F, and the regulatory subunits C and H. The proton translocation complex V0 consists of the proton transport subunit a, a ring of proteolipid subunits c9c'', rotary subunit d, subunits e and f, and two accessory subunits.

The protein localises to the vacuole membrane. Proton-conducting pore forming subunit of the V0 complex of vacuolar(H+)-ATPase (V-ATPase), a multisubunit enzyme composed of a peripheral complex (V1) that hydrolyzes ATP and a membrane integral complex (V0) that translocates protons. V-ATPase is responsible for acidifying and maintaining the pH of intracellular compartments and in some cell types, is targeted to the plasma membrane, where it is responsible for acidifying the extracellular environment. This Nephrops norvegicus (Norway lobster) protein is V-type proton ATPase 16 kDa proteolipid subunit c.